Consider the following 30-residue polypeptide: 80 kDa carcinoembryonic antigen-binding protein (30 aa).

As to quaternary structure, binds to carcinoembryonic antigen (CEA). The N-terminus is blocked.

The protein localises to the cell membrane. Functionally, may play a role in the development of hepatic metastases from colorectal cancers. The protein is 80 kDa carcinoembryonic antigen-binding protein of Rattus norvegicus (Rat).